The following is a 342-amino-acid chain: Glyceraldehyde-3-phosphate dehydrogenase (342 aa).

NAD(+)-binding positions include 12-13 (RI), aspartate 34, lysine 78, and threonine 120. D-glyceraldehyde 3-phosphate contacts are provided by residues 151 to 153 (SCT) and threonine 182. The active-site Nucleophile is the cysteine 152. An NAD(+)-binding site is contributed by asparagine 183. Residues arginine 197, 210 to 211 (TG), and arginine 233 each bind D-glyceraldehyde 3-phosphate. Asparagine 322 provides a ligand contact to NAD(+).

The protein belongs to the glyceraldehyde-3-phosphate dehydrogenase family. Homotetramer.

The protein localises to the cytoplasm. It carries out the reaction D-glyceraldehyde 3-phosphate + phosphate + NAD(+) = (2R)-3-phospho-glyceroyl phosphate + NADH + H(+). It participates in carbohydrate degradation; glycolysis; pyruvate from D-glyceraldehyde 3-phosphate: step 1/5. Functionally, catalyzes the oxidative phosphorylation of glyceraldehyde 3-phosphate (G3P) to 1,3-bisphosphoglycerate (BPG) using the cofactor NAD. The first reaction step involves the formation of a hemiacetal intermediate between G3P and a cysteine residue, and this hemiacetal intermediate is then oxidized to a thioester, with concomitant reduction of NAD to NADH. The reduced NADH is then exchanged with the second NAD, and the thioester is attacked by a nucleophilic inorganic phosphate to produce BPG. The sequence is that of Glyceraldehyde-3-phosphate dehydrogenase (gap) from Aquifex aeolicus (strain VF5).